Reading from the N-terminus, the 287-residue chain is Lycopene elongase/hydratase (287 aa).

7 helical membrane-spanning segments follow: residues 15-35, 37-57, 97-117, 137-157, 166-186, 218-238, and 265-285; these read ISWV…AGEI, WLFW…MYGI, IPFL…WLTI, FIDA…GATI, MWIA…LGAV, LLAA…GIAI, and VFLW…IAIH.

This sequence belongs to the UbiA prenyltransferase family.

The protein resides in the cell membrane. It carries out the reaction all-trans-lycopene + dimethylallyl diphosphate + A + H2O = nonaflavuxanthin + AH2 + diphosphate. The enzyme catalyses nonaflavuxanthin + dimethylallyl diphosphate + A + H2O = flavuxanthin + AH2 + diphosphate. It participates in carotenoid biosynthesis. Functionally, catalyzes the elongation of the C(40) carotenoid all-trans-lycopene to the acyclic C(50) carotenoid flavuxanthin during decaprenoxanthin biosynthesis. Acts as a bifunctional enzyme that catalyzes the elongation of lycopene by attaching a C(5) isoprene unit at C-2, as well as the hydroxylation of the new isoprene unit. The enzyme acts at both ends of the substrate, forming the C(50) carotenoid flavuxanthin via the C(45) intermediate nonaflavuxanthin. The chain is Lycopene elongase/hydratase from Corynebacterium glutamicum (Brevibacterium saccharolyticum).